Here is a 63-residue protein sequence, read N- to C-terminus: Large ribosomal subunit protein uL29 (63 aa).

The protein belongs to the universal ribosomal protein uL29 family.

This is Large ribosomal subunit protein uL29 from Sulfurovum sp. (strain NBC37-1).